A 385-amino-acid chain; its full sequence is Cytochrome b (385 aa).

Helical transmembrane passes span 32–52 (FGSLLALCLVIQLATGITLAM), 76–98 (WFIRYAHANTASFFFICIYAHMG), 113–133 (PWSIGVIIFLLLIITAFMGYV), and 179–199 (FFALHYLMPFVLAVFALLHLI). Heme b is bound by residues histidine 82 and histidine 96. Heme b contacts are provided by histidine 183 and histidine 197. Residue histidine 202 coordinates a ubiquinone. A run of 4 helical transmembrane segments spans residues 225–245 (YSFKDLITVFAFLLMFTLFVF), 289–309 (LGGVIAMVAAILILLILPIVD), 321–341 (ISKLLFGFFICNFLLLGVLGQ), and 348–368 (FIVLGQICTIFYFSYFLILLP).

Belongs to the cytochrome b family. As to quaternary structure, fungal cytochrome b-c1 complex contains 10 subunits; 3 respiratory subunits, 2 core proteins and 5 low-molecular weight proteins. Cytochrome b-c1 complex is a homodimer. Heme b is required as a cofactor.

The protein resides in the mitochondrion inner membrane. Functionally, component of the ubiquinol-cytochrome c reductase complex (complex III or cytochrome b-c1 complex) that is part of the mitochondrial respiratory chain. The b-c1 complex mediates electron transfer from ubiquinol to cytochrome c. Contributes to the generation of a proton gradient across the mitochondrial membrane that is then used for ATP synthesis. The sequence is that of Cytochrome b (COB) from Yarrowia lipolytica (strain CLIB 122 / E 150) (Yeast).